The chain runs to 717 residues: Putative amino acid transporter AAT1 (717 aa).

A compositionally biased stretch (basic and acidic residues) spans 1–10 (MREGAFDASR). A disordered region spans residues 1–88 (MREGAFDASR…DRAQTDSRQE (88 aa)). Polar residues predominate over residues 16–25 (QRPSSLSTAQ). The span at 26–53 (PPSDSRPPSSSSPPSSSSSSSSASSSSP) shows a compositional bias: low complexity. Basic and acidic residues predominate over residues 74–88 (SAEKMDRAQTDSRQE). 8 consecutive transmembrane segments (helical) span residues 124 to 143 (VLTL…PYAM), 149 to 170 (LIGL…YILM), 196 to 216 (AVDA…LVFL), 236 to 253 (HRAA…PLSV), 265 to 283 (FFPV…YRSL), 303 to 320 (FKSF…INVC), 341 to 358 (AALL…LGYL), and 378 to 402 (LMHV…IPTV). Residues 462-602 (GDAEYGGAEA…REEREEREGQ (141 aa)) are disordered. Low complexity predominate over residues 463–477 (DAEYGGAEAGEATRG). Over residues 497–519 (ARNRDRSRLHADSERSAGDREGS) the composition is skewed to basic and acidic residues. Positions 547-558 (GSSSASSRSVDS) are enriched in low complexity. Positions 584-602 (SGDREAREEREEREEREGQ) are enriched in basic and acidic residues. 3 helical membrane-spanning segments follow: residues 622–638 (VCVA…ALVL), 644–669 (VVGL…YAGI), and 681–702 (LLMV…IIIL).

This sequence belongs to the amino acid/polyamine transporter 2 family.

The protein resides in the vacuole membrane. Its function is as follows. Putative amino acid transporter. Probably transports arginine. Involved in maintaining the osmotic homeostasis of the digestive vacuole. Required for extracellular parasite survival and bradyzoite differentiation. In Toxoplasma gondii (strain ATCC 50611 / Me49), this protein is Putative amino acid transporter AAT1.